A 494-amino-acid chain; its full sequence is Chromosomal replication initiator protein DnaA (494 aa).

A domain I, interacts with DnaA modulators region spans residues 1-103; that stretch reads MTNIGGPVVE…LRVEVIVRGM (103 aa). A domain II region spans residues 103–148; sequence MKRVSKGVVCRTSAAPVVLEGQTASSFVESYTEPSVKDIEAGVFGS. Residues 149–371 form a domain III, AAA+ region region; sequence PLDSRYTFES…GAFNQLLFRQ (223 aa). The ATP site is built by G195, G197, K198, and T199. Residues 372-494 are domain IV, binds dsDNA; the sequence is SFESDLSLER…LKRLIGEQAA (123 aa).

It belongs to the DnaA family. As to quaternary structure, oligomerizes as a right-handed, spiral filament on DNA at oriC.

It is found in the cytoplasm. Its function is as follows. Plays an essential role in the initiation and regulation of chromosomal replication. ATP-DnaA binds to the origin of replication (oriC) to initiate formation of the DNA replication initiation complex once per cell cycle. Binds the DnaA box (a 9 base pair repeat at the origin) and separates the double-stranded (ds)DNA. Forms a right-handed helical filament on oriC DNA; dsDNA binds to the exterior of the filament while single-stranded (ss)DNA is stabiized in the filament's interior. The ATP-DnaA-oriC complex binds and stabilizes one strand of the AT-rich DNA unwinding element (DUE), permitting loading of DNA polymerase. After initiation quickly degrades to an ADP-DnaA complex that is not apt for DNA replication. Binds acidic phospholipids. The polypeptide is Chromosomal replication initiator protein DnaA (Bartonella quintana (strain Toulouse) (Rochalimaea quintana)).